The chain runs to 113 residues: Transcription initiation factor IIA subunit 2 (113 aa).

This sequence belongs to the TFIIA subunit 2 family. In terms of assembly, TFIIA is a heterodimer of the large unprocessed subunit 1 and a small subunit gamma. It was originally believed to be a heterotrimer of an alpha, a beta and a gamma subunit.

The protein resides in the nucleus. TFIIA is a component of the transcription machinery of RNA polymerase II and plays an important role in transcriptional activation. TFIIA in a complex with TBP mediates transcriptional activity. This is Transcription initiation factor IIA subunit 2 from Caenorhabditis elegans.